The chain runs to 121 residues: Large ribosomal subunit protein uL14 (121 aa).

This sequence belongs to the universal ribosomal protein uL14 family. In terms of assembly, part of the 50S ribosomal subunit. Forms a cluster with proteins L3 and L19. In the 70S ribosome, L14 and L19 interact and together make contacts with the 16S rRNA in bridges B5 and B8.

Its function is as follows. Binds to 23S rRNA. Forms part of two intersubunit bridges in the 70S ribosome. The protein is Large ribosomal subunit protein uL14 of Parasynechococcus marenigrum (strain WH8102).